We begin with the raw amino-acid sequence, 695 residues long: Polyribonucleotide nucleotidyltransferase (695 aa).

Positions 486 and 492 each coordinate Mg(2+). Positions 553–612 constitute a KH domain; that stretch reads PRIETMQINTSKIATVIGPGGKQIRQIIERSGAQVDINDDGVINIAASTQESINKAKELI. Positions 622–690 constitute an S1 motif domain; that stretch reads GKVYNGRVTS…EKGQLKLSHK (69 aa).

It belongs to the polyribonucleotide nucleotidyltransferase family. Mg(2+) is required as a cofactor.

The protein localises to the cytoplasm. It carries out the reaction RNA(n+1) + phosphate = RNA(n) + a ribonucleoside 5'-diphosphate. Involved in mRNA degradation. Catalyzes the phosphorolysis of single-stranded polyribonucleotides processively in the 3'- to 5'-direction. The polypeptide is Polyribonucleotide nucleotidyltransferase (Chlamydia trachomatis serovar L2 (strain ATCC VR-902B / DSM 19102 / 434/Bu)).